The chain runs to 207 residues: MGTVKITSRYGILLGFIALLCTIISAGIFFLTKDKIDAVIAAQQRELLLQVIPQDYFNNNLLESAVIPQDKNFVGIQKIYFAKKDGNVSAYAYETTAPDGYSGDIRLLVGLDPKGEVLGVRVIEHHETPGLGDKIERRISNWILGFTNQSINEHNLSEWAVKKDGGKFDQFSGATITPRAVVNQTKRSALIMLNNQALLQQLSTQVK.

Residues 11–31 (GILLGFIALLCTIISAGIFFL) form a helical membrane-spanning segment. Threonine 175 is modified (FMN phosphoryl threonine).

It belongs to the RnfG family. As to quaternary structure, the complex is composed of six subunits: RnfA, RnfB, RnfC, RnfD, RnfE and RnfG. FMN is required as a cofactor.

It localises to the cell inner membrane. In terms of biological role, part of a membrane-bound complex that couples electron transfer with translocation of ions across the membrane. This chain is Ion-translocating oxidoreductase complex subunit G, found in Haemophilus influenzae (strain ATCC 51907 / DSM 11121 / KW20 / Rd).